Here is a 78-residue protein sequence, read N- to C-terminus: Acyl carrier protein (78 aa).

Residues 2 to 77 (SDTEERVKKI…DAVKFIDKAS (76 aa)) form the Carrier domain. At Ser37 the chain carries O-(pantetheine 4'-phosphoryl)serine.

The protein belongs to the acyl carrier protein (ACP) family. In terms of processing, 4'-phosphopantetheine is transferred from CoA to a specific serine of apo-ACP by AcpS. This modification is essential for activity because fatty acids are bound in thioester linkage to the sulfhydryl of the prosthetic group.

The protein resides in the cytoplasm. It participates in lipid metabolism; fatty acid biosynthesis. Its function is as follows. Carrier of the growing fatty acid chain in fatty acid biosynthesis. This chain is Acyl carrier protein, found in Bartonella bacilliformis (strain ATCC 35685 / KC583 / Herrer 020/F12,63).